Reading from the N-terminus, the 378-residue chain is Cobalt-precorrin-5B C(1)-methyltransferase (378 aa).

This sequence belongs to the CbiD family.

The catalysed reaction is Co-precorrin-5B + S-adenosyl-L-methionine = Co-precorrin-6A + S-adenosyl-L-homocysteine. Its pathway is cofactor biosynthesis; adenosylcobalamin biosynthesis; cob(II)yrinate a,c-diamide from sirohydrochlorin (anaerobic route): step 6/10. Functionally, catalyzes the methylation of C-1 in cobalt-precorrin-5B to form cobalt-precorrin-6A. This is Cobalt-precorrin-5B C(1)-methyltransferase from Photorhabdus laumondii subsp. laumondii (strain DSM 15139 / CIP 105565 / TT01) (Photorhabdus luminescens subsp. laumondii).